The sequence spans 264 residues: Glutamate racemase (264 aa).

Substrate contacts are provided by residues D10 to S11 and Y42 to G43. Catalysis depends on C73, which acts as the Proton donor/acceptor. N74–T75 contacts substrate. The active-site Proton donor/acceptor is C183. Substrate is bound at residue T184–H185.

Belongs to the aspartate/glutamate racemases family.

It catalyses the reaction L-glutamate = D-glutamate. It functions in the pathway cell wall biogenesis; peptidoglycan biosynthesis. Provides the (R)-glutamate required for cell wall biosynthesis. In Streptococcus pyogenes serotype M3 (strain ATCC BAA-595 / MGAS315), this protein is Glutamate racemase.